A 301-amino-acid polypeptide reads, in one-letter code: Ribonuclease HIII (301 aa).

Residues 88–301 (WSVLGSDEVG…TQKARQLARQ (214 aa)) enclose the RNase H type-2 domain. A divalent metal cation-binding residues include aspartate 94, glutamate 95, and aspartate 197.

This sequence belongs to the RNase HII family. RnhC subfamily. Requires Mn(2+) as cofactor. Mg(2+) is required as a cofactor.

Its subcellular location is the cytoplasm. The catalysed reaction is Endonucleolytic cleavage to 5'-phosphomonoester.. Functionally, endonuclease that specifically degrades the RNA of RNA-DNA hybrids. The polypeptide is Ribonuclease HIII (Limosilactobacillus fermentum (strain NBRC 3956 / LMG 18251) (Lactobacillus fermentum)).